The primary structure comprises 174 residues: UPF0664 stress-induced protein C29B12.11c (174 aa).

Residues 147-174 (HLDPLPPYHRPSSSQDQPPHYEEAVNKS) form a disordered region. Positions 165 to 174 (PHYEEAVNKS) are enriched in basic and acidic residues.

It belongs to the UPF0664 family.

It localises to the cytoplasm. The protein localises to the nucleus. In Schizosaccharomyces pombe (strain 972 / ATCC 24843) (Fission yeast), this protein is UPF0664 stress-induced protein C29B12.11c.